Reading from the N-terminus, the 261-residue chain is Calcium-binding protein 8 (261 aa).

Residues 1-41 are disordered; it reads MRLPEQPGDGKPENETKGDQETPERGEEPRRSPAPDFPTWE. The Cytoplasmic portion of the chain corresponds to 1-234; sequence MRLPEQPGDG…QNRQTCVRKS (234 aa). Positions 8–33 are enriched in basic and acidic residues; sequence GDGKPENETKGDQETPERGEEPRRSP. EF-hand domains follow at residues 78–113 and 114–149; these read EELD…LGYM and PSEV…KLVS. 9 residues coordinate Ca(2+): D91, D93, N95, E102, D127, D129, D131, Q133, and E138. The helical; Anchor for type IV membrane protein transmembrane segment at 235–255 threads the bilayer; the sequence is LICAFAMAFIISVMLIAANQI. Residues 256–261 lie on the Extracellular side of the membrane; sequence LRSGME.

Interacts with PI4KB. This binding competes with FREQ/NCS1 binding in a calcium-dependent manner. In terms of tissue distribution, brain-specific. High expression in the cerebellum, hippocampus, and cortex.

It is found in the golgi apparatus. The protein localises to the trans-Golgi network membrane. The protein resides in the cytoplasm. It localises to the perinuclear region. Its subcellular location is the cell membrane. Negatively regulates Golgi-to-plasma membrane trafficking by interacting with PI4KB and inhibiting its activity. May play a role in the physiology of neurons and is potentially important in memory and learning. The polypeptide is Calcium-binding protein 8 (Caln1) (Mus musculus (Mouse)).